The following is a 457-amino-acid chain: Peptidyl-prolyl cis-trans isomerase FKBP5 (457 aa).

Position 1 is an N-acetylmethionine (Met-1). Residues 1-11 (MTTDEGAKNNE) show a composition bias toward basic and acidic residues. The segment at 1 to 24 (MTTDEGAKNNEESPTATVAEQGED) is disordered. Ser-13 carries the phosphoserine modification. Position 28 is an N6-acetyllysine (Lys-28). One can recognise a PPIase FKBP-type 1 domain in the interval 42–130 (NGEETPMIGD…KIPSNATLFF (89 aa)). Residue Lys-155 is modified to N6-acetyllysine. In terms of domain architecture, PPIase FKBP-type 2 spans 157–243 (EGYSNPNEGA…GIEPNAELIY (87 aa)). TPR repeat units lie at residues 268–301 (AAIVKEKGTVYFKGGKYMQAVIQYGKIVSWLEME), 317–350 (LAAFLNLAMCYLKLREYTKAVECCDKALGLDSAN), and 351–384 (EKGLYRRGEAQLLMNEFESAKGDFEKVLEVNPQN). A disordered region spans residues 420-457 (DAKEEANKAMGKKTSEGVTNEKGTDSQAMEEEKPEGHV). A Phosphoserine modification is found at Ser-445.

As to quaternary structure, part of a heteromultimeric cytoplasmic complex with HSP90AA1, HSPA1A/HSPA1B and steroid receptors. Upon ligand binding dissociates from the complex and FKBP4 takes its place. Interacts with functionally mature heterooligomeric progesterone receptor complexes along with HSP90 and TEBP. Interacts with NR3C1. Interacts with Akt/AKT1 and PHLPP1; enhancing dephosphorylation and subsequent activation of Akt/AKT1. Interacts with IFI44L; this interaction modulates the kinase activity of IKBKB and IKBKE. Interacts with IKBKB and IKBKE. In terms of processing, acetylation impairs ability to promote interaction between Akt/AKT1 and PHLPP1. Deacetylation by SIRT7 promotes interaction between Akt/AKT1 and PHLPP1, leading to suppress Akt/AKT1 activation. Ubiquitinated, leading to degradation in a proteasome-dependent manner. Deubiquitinated by USP49, leading to stabilization. Widely expressed, enriched in testis compared to other tissues.

It localises to the cytoplasm. The protein localises to the nucleus. It catalyses the reaction [protein]-peptidylproline (omega=180) = [protein]-peptidylproline (omega=0). With respect to regulation, inhibited by both FK506 and rapamycin. Functionally, immunophilin protein with PPIase and co-chaperone activities. Component of unligated steroid receptors heterocomplexes through interaction with heat-shock protein 90 (HSP90). Plays a role in the intracellular trafficking of heterooligomeric forms of steroid hormone receptors maintaining the complex into the cytoplasm when unliganded. Acts as a regulator of Akt/AKT1 activity by promoting the interaction between Akt/AKT1 and PHLPP1, thereby enhancing dephosphorylation and subsequent activation of Akt/AKT1. Interacts with IKBKE and IKBKB which facilitates IKK complex assembly leading to increased IKBKE and IKBKB kinase activity, NF-kappa-B activation, and IFN production. The protein is Peptidyl-prolyl cis-trans isomerase FKBP5 (FKBP5) of Homo sapiens (Human).